We begin with the raw amino-acid sequence, 393 residues long: Putative bacilysin exporter BacE (393 aa).

A run of 10 helical transmembrane segments spans residues 11 to 31 (LLFG…ALLI), 43 to 63 (SGVI…GVLV), 69 to 89 (VKIM…LTFL), 92 to 112 (GEYP…GVFF), 133 to 155 (LFAK…FLLG), 160 to 177 (LAVA…FFIS), 215 to 235 (MFTM…FPIV), 244 to 264 (IGNF…AALV), 287 to 307 (ALFL…LFFI), and 353 to 373 (IVDA…LFLH).

This sequence belongs to the major facilitator superfamily.

The protein resides in the cell membrane. Functionally, part of the bacilysin biosynthesis operon. May be involved in self-resistance to bacilysin by permitting efflux of this antibiotic. The sequence is that of Putative bacilysin exporter BacE (bacE) from Bacillus amyloliquefaciens (Bacillus velezensis).